Here is a 198-residue protein sequence, read N- to C-terminus: Protein FAM219B (198 aa).

Disordered regions lie at residues 1 to 58 (MATA…KRGP) and 83 to 146 (RRKG…EQVN). Phosphoserine occurs at positions 14, 91, 125, and 127. Polar residues predominate over residues 134-146 (RYSSGYSSAEQVN).

The protein belongs to the FAM219 family.

In Homo sapiens (Human), this protein is Protein FAM219B (FAM219B).